The chain runs to 360 residues: Peptide chain release factor 1 (360 aa).

Gln-236 is modified (N5-methylglutamine).

It belongs to the prokaryotic/mitochondrial release factor family. In terms of processing, methylated by PrmC. Methylation increases the termination efficiency of RF1.

The protein localises to the cytoplasm. Functionally, peptide chain release factor 1 directs the termination of translation in response to the peptide chain termination codons UAG and UAA. This chain is Peptide chain release factor 1, found in Lactiplantibacillus plantarum (strain ATCC BAA-793 / NCIMB 8826 / WCFS1) (Lactobacillus plantarum).